Here is an 826-residue protein sequence, read N- to C-terminus: Hyaluronate lyase HylA (826 aa).

The tat-type signal signal peptide spans 1-36; sequence MFDIPYQVPSRRTFLSLSALSAIAIAASPEMPDAFA. Residues His276, Tyr285, and Arg339 contribute to the active site. The tract at residues 800–826 is disordered; that stretch reads LSPALPKPTKPSLRASSYPLGLPHTSS.

This sequence belongs to the polysaccharide lyase 8 family. Predicted to be exported by the Tat system. The position of the signal peptide cleavage has not been experimentally proven.

The protein localises to the secreted. It catalyses the reaction [hyaluronan](n) = n 3-(4-deoxy-beta-D-gluc-4-enuronosyl)-N-acetyl-D-glucosamine + H2O. Its function is as follows. Degrades hyaluronic acid (HA) into large-sized HA oligosaccharides, including tetrasaccharide HA (HA-4), hexasaccharide HA (HA-6) and higher molecular weight HA, and to a lesser extent into HA disaccharides (HA-2). Involved in the pathogenesis of acne. HA degradation products induce secretion of proinflammatory cytokines (IL-6, IL-8 and TNF-alpha) from human HaCaT keratinocyte cell line and from mouse bone marrow derived macrophages (BMDMs). Produced HA fragments also direct robust TLR2-dependent inflammation in the mouse model of acne. In Cutibacterium acnes (Propionibacterium acnes), this protein is Hyaluronate lyase HylA.